An 89-amino-acid polypeptide reads, in one-letter code: Small ribosomal subunit protein uS15 (89 aa).

This sequence belongs to the universal ribosomal protein uS15 family. In terms of assembly, part of the 30S ribosomal subunit. Forms a bridge to the 50S subunit in the 70S ribosome, contacting the 23S rRNA.

Its function is as follows. One of the primary rRNA binding proteins, it binds directly to 16S rRNA where it helps nucleate assembly of the platform of the 30S subunit by binding and bridging several RNA helices of the 16S rRNA. Forms an intersubunit bridge (bridge B4) with the 23S rRNA of the 50S subunit in the ribosome. The polypeptide is Small ribosomal subunit protein uS15 (Desulfatibacillum aliphaticivorans).